The sequence spans 305 residues: MIKQRTLKQSIKVTGVGLHSGNKVTLTLRPAMPNTGVIYCRTDMNPPVTFPANANAVRDTMLCTCLINEDGVRISTVEHLNAALAGLGIDNIIIEVDAPEIPIMDGSASPFIYLLLDAGIEEQNVAKKFIRVKKPIRIEDGDKWAEFKPYDGFRLDFTIDFEHPAIGKDVRNYVMDFSAQAFVQQISRARTFGFMKDIEYLQSQGLALGGSLDNAIVLDDYRILNEDGLRFKDELVRHKMLDAIGDLYMCGYNIIGDFKAYKSGHGLNNKLLRALLENQEAWEFVSFEDKEEIPQGYVSPAQVFI.

Zn(2+) is bound by residues H79, H238, and D242. The active-site Proton donor is the H265.

Belongs to the LpxC family. The cofactor is Zn(2+).

The catalysed reaction is a UDP-3-O-[(3R)-3-hydroxyacyl]-N-acetyl-alpha-D-glucosamine + H2O = a UDP-3-O-[(3R)-3-hydroxyacyl]-alpha-D-glucosamine + acetate. Its pathway is glycolipid biosynthesis; lipid IV(A) biosynthesis; lipid IV(A) from (3R)-3-hydroxytetradecanoyl-[acyl-carrier-protein] and UDP-N-acetyl-alpha-D-glucosamine: step 2/6. Functionally, catalyzes the hydrolysis of UDP-3-O-myristoyl-N-acetylglucosamine to form UDP-3-O-myristoylglucosamine and acetate, the committed step in lipid A biosynthesis. This Histophilus somni (strain 129Pt) (Haemophilus somnus) protein is UDP-3-O-acyl-N-acetylglucosamine deacetylase.